Reading from the N-terminus, the 317-residue chain is HTH-type transcriptional repressor PA14_22550 (317 aa).

Residues methionine 1–threonine 59 form the HTH lysR-type domain. The H-T-H motif DNA-binding region spans phenylalanine 19–serine 38.

This sequence belongs to the LysR transcriptional regulatory family.

Represses the transcription of the operon that consists of PA14_22510 to PA14_22540. In Pseudomonas aeruginosa (strain UCBPP-PA14), this protein is HTH-type transcriptional repressor PA14_22550.